The primary structure comprises 1117 residues: DNA polymerase (1117 aa).

A disordered region spans residues 591 to 621 (ESSPVASFEEDSEQTSDSSLGEVSSQGSSDG). Positions 606–618 (SDSSLGEVSSQGS) are enriched in low complexity.

The protein belongs to the DNA polymerase type-B family.

It localises to the host nucleus. It catalyses the reaction DNA(n) + a 2'-deoxyribonucleoside 5'-triphosphate = DNA(n+1) + diphosphate. The polypeptide is DNA polymerase (Cavia porcellus (Guinea pig)).